A 576-amino-acid chain; its full sequence is MKRLRVTLAQLNPTLGDFEGNLKKAIEALRVAEDRGSDLLVFPELFLPGYPPEDLMLRLSFLRENRKYLQKFAQHTRNLGVTVLMGFIDSDEDAYNAAAVVKDGEILGVYRKISLPNYGVFDERRYFKPGEELLVVKIGNIKVGVTICEDIWNPVEPSASLSLGEGVHLIANLSASPYHVGKPVLRKDYLSMKAYDYHVAMAYCNMVGGQDELVFDGGSMVVDASGEVINYGKLFEEEIITVDLDLDENLRVSLVDPRRRYMKTQNYPVKTVEAGNLREKSGHFEPVVNPLPVREEEMFRALITGLRDYVRKNGFEKVVIGLSGGMDSSLVAVIATEALGKENVKGVLMPSMYTSKESIEDAQTLAKNLGIETFIIPITDVFHSYLETLKGVFAGREPDITEENLQARIRGNYLMALSNKFGWLVLTTGNKSEMATGYATLYGDMAGGFAVIKDVYKTDVYRIGRWYNSWRGKEIIPENIFVKPPTAELRPGQTDQEKLPPYEVLDEILRLYIEEGLDPEEIASKGFDRKTVLDVTEMIRKNEYKRKQAAIGVKISTRAFGKDWRMPITNRFKEPL.

Residues 4 to 246 (LRVTLAQLNP…EEIITVDLDL (243 aa)) form the CN hydrolase domain. E44 serves as the catalytic Proton acceptor; for glutaminase activity. The For glutaminase activity role is filled by K112. Residue Y118 coordinates L-glutamine. C148 functions as the Nucleophile; for glutaminase activity in the catalytic mechanism. L-glutamine is bound by residues S176 and K182. Residues 292-576 (PVREEEMFRA…PITNRFKEPL (285 aa)) form a ligase region. 321-328 (GLSGGMDS) is a binding site for ATP. N404 contributes to the deamido-NAD(+) binding site. An ATP-binding site is contributed by T428. E433 and K545 together coordinate deamido-NAD(+).

In the C-terminal section; belongs to the NAD synthetase family.

The catalysed reaction is deamido-NAD(+) + L-glutamine + ATP + H2O = L-glutamate + AMP + diphosphate + NAD(+) + H(+). It functions in the pathway cofactor biosynthesis; NAD(+) biosynthesis; NAD(+) from deamido-NAD(+) (L-Gln route): step 1/1. Functionally, catalyzes the ATP-dependent amidation of deamido-NAD to form NAD. Uses L-glutamine as a nitrogen source. The protein is Glutamine-dependent NAD(+) synthetase (nadE2) of Thermotoga maritima (strain ATCC 43589 / DSM 3109 / JCM 10099 / NBRC 100826 / MSB8).